Reading from the N-terminus, the 1010-residue chain is ATP-dependent DNA/RNA helicase DHX36 (1010 aa).

The tract at residues 1 to 54 is required for recruitment to cytoplasmic stress granules; that stretch reads MSYDYHQNWGRDGGPRSSGGGYGGSYGGSHGGGHGGNRGSGGGGGGGGGRGGRG. The interval 1–63 is disordered; the sequence is MSYDYHQNWG…GRHPGHLKGR (63 aa). The interval 1-107 is required for the pre-miR-134 transport; the sequence is MSYDYHQNWG…IVQLLHSVQT (107 aa). Positions 1–202 are necessary for nuclear and nucleolar caps localizations; the sequence is MSYDYHQNWG…KKTDLRYIEM (202 aa). Residues 16 to 51 are compositionally biased toward gly residues; sequence RSSGGGYGGSYGGSHGGGHGGNRGSGGGGGGGGGRG. A DSM (DHX36-specific motif) region spans residues 56 to 78; that stretch reads HPGHLKGREIGLWYAKKQGQKNK. A required for G4-DNA- and G4-RNA-binding region spans residues 56–108; that stretch reads HPGHLKGREIGLWYAKKQGQKNKEAERQERAVVHMDERREEQIVQLLHSVQTK. 2 recA-like domain regions span residues 109–388 and 389–630; these read NDKD…MIHI and PGFT…DYQL. The region spanning 219 to 389 is the Helicase ATP-binding domain; sequence VNMIDNHQVT…FGNCPMIHIP (171 aa). ATP is bound at residue 235–240; that stretch reads GCGKTT. A necessary for interaction with single-stranded DNA at the 3'-end of the G4-DNA structure region spans residues 267–319; that stretch reads RRISAISVAERVAAERAESCGNGNSTGYQIRLQSRLPRKQGSILYCTTGIILQ. Positions 336–339 match the DEAH box motif; sequence DEIH. Residues glutamate 337 and histidine 339 each coordinate Mg(2+). The 171-residue stretch at 479-649 folds into the Helicase C-terminal domain; sequence ALIRYIVLEE…ELCLQIKILR (171 aa). The interval 500–559 is necessary for interaction with single-stranded DNA at the 3'-end of the G4-DNA structure; it reads WDNISTLHDLLMSQVMFKSDKFIIIPLHSLMPTVNQTQVFKRTPPGVRKIVIATNIAETS. A Nuclear localization signal motif is present at residues 519-530; that stretch reads DKFIIIPLHSLM. ATP contacts are provided by residues serine 559 and 604–607; that span reads RAGR. The interval 631-700 is WH domain; the sequence is PEILRTPLEE…LGVHLARLPV (70 aa). Necessary for interaction with single-stranded DNA at the 3'-end of the G4-DNA structure regions lie at residues 640–699, 851–862, and 872–902; these read ELCL…ARLP, NLGKKRKMVKVY, and HPKSVNVEQTEFNYNWLIYHLKMRTSSIYLY. An OB-fold-like subdomains region spans residues 843–907; sequence PKVAKIRLNL…SIYLYDCTEV (65 aa). An N6-acetyllysine modification is found at lysine 949. Serine 965 is modified (phosphoserine).

In terms of assembly, found in a multi-helicase-TICAM1 complex at least composed of DHX36, DDX1, DDX21 and TICAM1; this complex exists in resting cells with or without dsRNA poly(I:C) ligand stimulation. Interacts (via C-terminus) with TICAM1 (via TIR domain). Interacts (via C-terminus) with DDX21; this interaction serves as bridges to TICAM1. Interacts with TERT; this interaction is dependent on the ability of DHX36 to bind to the G-quadruplex RNA (G4-RNA) structure present in the telomerase RNA template component (TERC). Interacts with DKC1; this interaction is dependent on the ability of DHX36 to bind to the G4-RNA structure present in TERC. Interacts with PARN; this interaction stimulates PARN to enhance uPA mRNA decay. Interacts with EXOSC3; this interaction occurs in a RNase-insensitive manner. Interacts with EXOSC10; this interaction occurs in a RNase-insensitive manner. Interacts with ILF3; this interaction occurs in a RNA-dependent manner. Interacts with ELAVL1; this interaction occurs in an RNA-dependent manner. Interacts with DDX5; this interaction occurs in a RNA-dependent manner. Interacts with DDX17; this interaction occurs in a RNA-dependent manner. Interacts with HDAC1; this interaction occurs in a RNA-dependent manner. Interacts with HDAC3; this interaction occurs in a RNA-dependent manner. Interacts with HDAC4. Interacts with AGO1. Interacts with AGO2. Interacts with ERCC6. Requires Mg(2+) as cofactor.

It localises to the nucleus. The protein localises to the cytoplasm. The protein resides in the cytosol. It is found in the stress granule. Its subcellular location is the nucleus speckle. It localises to the chromosome. The protein localises to the telomere. The protein resides in the mitochondrion. It is found in the perikaryon. Its subcellular location is the cell projection. It localises to the dendrite. The protein localises to the axon. The catalysed reaction is ATP + H2O = ADP + phosphate + H(+). With respect to regulation, ATPase activity is enhanced in the presence of homomeric poly(U) RNAs, but not by double-stranded DNA (dsDNA), double-stranded RNA (dsRNA) and tRNA. Functionally, multifunctional ATP-dependent helicase that unwinds G-quadruplex (G4) structures. Plays a role in many biological processes such as genomic integrity, gene expression regulations and as a sensor to initiate antiviral responses. G4 structures correspond to helical structures containing guanine tetrads. Binds with high affinity to and unwinds G4 structures that are formed in nucleic acids (G4-DNA and G4-RNA). Plays a role in genomic integrity. Converts the G4-RNA structure present in telomerase RNA template component (TREC) into a double-stranded RNA to promote P1 helix formation that acts as a template boundary ensuring accurate reverse transcription. Plays a role in transcriptional regulation. Resolves G4-DNA structures in promoters of genes, such as YY1, KIT/c-kit and ALPL and positively regulates their expression. Plays a role in post-transcriptional regulation. Unwinds a G4-RNA structure located in the 3'-UTR polyadenylation site of the pre-mRNA TP53 and stimulates TP53 pre-mRNA 3'-end processing in response to ultraviolet (UV)-induced DNA damage. Binds to the precursor-microRNA-134 (pre-miR-134) terminal loop and regulates its transport into the synapto-dendritic compartment. Involved in the pre-miR-134-dependent inhibition of target gene expression and the control of dendritic spine size. Plays a role in the regulation of cytoplasmic mRNA translation and mRNA stability. Binds to both G4-RNA structures and alternative non-quadruplex-forming sequence within the 3'-UTR of the PITX1 mRNA regulating negatively PITX1 protein expression. Binds to both G4-RNA structure in the 5'-UTR and AU-rich elements (AREs) localized in the 3'-UTR of NKX2-5 mRNA to either stimulate protein translation or induce mRNA decay in an ELAVL1-dependent manner, respectively. Also binds to ARE sequences present in several mRNAs mediating exosome-mediated 3'-5' mRNA degradation. Involved in cytoplasmic urokinase-type plasminogen activator (uPA) mRNA decay. Component of a multi-helicase-TICAM1 complex that acts as a cytoplasmic sensor of viral double-stranded RNA (dsRNA) and plays a role in the activation of a cascade of antiviral responses including the induction of pro-inflammatory cytokines via the adapter molecule TICAM1. Required for the early embryonic development and hematopoiesis. Involved in the regulation of cardioblast differentiation and proliferation during heart development. Involved in spermatogonia differentiation. May play a role in ossification. This Bos taurus (Bovine) protein is ATP-dependent DNA/RNA helicase DHX36.